The chain runs to 455 residues: Major capsid protein (455 aa).

The protein belongs to the ascoviridae capsid protein family.

It is found in the virion. In terms of biological role, major protein of the capsid. The sequence is that of Major capsid protein (MCP) from Heliothis virescens ascovirus 3e (HvAV-3e).